Consider the following 337-residue polypeptide: Beta-glucosidase-like protein NCA3, mitochondrial (337 aa).

The segment covering 57–67 (ESAATTTTLSS) has biased composition (low complexity). A disordered region spans residues 57-84 (ESAATTTTLSSSEKDTSEQKRDGGFQDG). Positions 68–80 (SEKDTSEQKRDGG) are enriched in basic and acidic residues.

Belongs to the SUN family.

It is found in the mitochondrion. Involved in the mitochondrial expression of subunits 6 and 8 of the F0-F1 ATP synthase. This Saccharomyces cerevisiae (strain ATCC 204508 / S288c) (Baker's yeast) protein is Beta-glucosidase-like protein NCA3, mitochondrial (NCA3).